The chain runs to 357 residues: Chorismate synthase (357 aa).

Arg46 contacts NADP(+). FMN contacts are provided by residues 123–125 (RSS), 235–236 (NA), Gly275, 290–294 (KPTPS), and Arg316.

This sequence belongs to the chorismate synthase family. As to quaternary structure, homotetramer. FMNH2 is required as a cofactor.

It carries out the reaction 5-O-(1-carboxyvinyl)-3-phosphoshikimate = chorismate + phosphate. Its pathway is metabolic intermediate biosynthesis; chorismate biosynthesis; chorismate from D-erythrose 4-phosphate and phosphoenolpyruvate: step 7/7. Catalyzes the anti-1,4-elimination of the C-3 phosphate and the C-6 proR hydrogen from 5-enolpyruvylshikimate-3-phosphate (EPSP) to yield chorismate, which is the branch point compound that serves as the starting substrate for the three terminal pathways of aromatic amino acid biosynthesis. This reaction introduces a second double bond into the aromatic ring system. The polypeptide is Chorismate synthase (Sulfurovum sp. (strain NBC37-1)).